We begin with the raw amino-acid sequence, 1312 residues long: DNA repair protein RAD50 (1312 aa).

ATP is bound by residues Arg13, Asn36, Gly37, Gly39, Lys40, Thr41, Thr42, Ile65, Asp67, and Gln158. Thr41 provides a ligand contact to Mg(2+). A Mg(2+)-binding site is contributed by Gln158. 2 coiled-coil regions span residues 185–347 (TKAL…LIRR) and 403–558 (QDLT…LQND). Ser469 carries the phosphoserine modification. Thr568 is subject to Phosphothreonine. A coiled-coil region spans residues 640–678 (DCTIDEYNDVLEETELSYKTALENLKMHQTTLEFNRKAL). The Zinc-hook domain occupies 640-741 (DCTIDEYNDV…SLRLLEKHII (102 aa)). Zn(2+)-binding residues include Cys687 and Cys690. 2 coiled-coil regions span residues 712–741 (DANFEKTLKDTVQNEKEYLHSLRLLEKHII) and 787–1108 (LAES…DIEK).

Belongs to the SMC family. RAD50 subfamily. In terms of assembly, component of the MRN complex composed of two heterodimers RAD50 and MRE11 associated with a single XRS2. The MRN complexes dimerize on DNA to form joined MRN-MRN oligomers required for DNA double-strand break repair. It depends on Zn(2+) as a cofactor.

The protein resides in the nucleus. It localises to the chromosome. It carries out the reaction ATP + H2O = ADP + phosphate + H(+). Its function is as follows. Component of the MRN complex, which plays a central role in double-strand break (DSB) repair, DNA recombination, maintenance of telomere integrity and meiosis. The MRN complex is involved in the repair of DNA double-strand breaks (DSBs) via homologous recombination (HR), an error-free mechanism which primarily occurs during S and G2 phases. The complex (1) mediates the end resection of damaged DNA, which generates proper single-stranded DNA, a key initial steps in HR, and is (2) required for the recruitment of other repair factors and efficient activation of TEL1/ATM and ATR upon DNA damage. The MRN complex possesses single-strand endonuclease activity and double-strand-specific 3'-5' exonuclease activity, which are provided by MRE11, to initiate end resection, which is required for single-strand invasion and recombination. Within the complex, RAD50 is both required to bind DNA ends and hold them in close proximity and regulate the activity of MRE11. RAD50 provides an ATP-dependent control of MRE11 by positioning DNA ends into the MRE11 active site: ATP-binding induces a large structural change from an open form with accessible MRE11 nuclease sites into a closed form. The MRN complex is also required for the processing of R-loops. The sequence is that of DNA repair protein RAD50 from Saccharomyces cerevisiae (strain ATCC 204508 / S288c) (Baker's yeast).